The sequence spans 396 residues: GTPase Obg (396 aa).

Residues 1–159 (MKFVDEASIY…RTLKLEMKVL (159 aa)) form the Obg domain. A disordered region spans residues 120–146 (GGHHGLGNTRFKSSTNRAPRQTTKGTV). Polar residues predominate over residues 129–144 (RFKSSTNRAPRQTTKG). The region spanning 160–333 (ADVGLLGLPN…LCLDLMTALD (174 aa)) is the OBG-type G domain. GTP is bound by residues 166 to 173 (GLPNAGKS), 191 to 195 (FTTLV), 213 to 216 (DIPG), 283 to 286 (NKTD), and 314 to 316 (SAI). 2 residues coordinate Mg(2+): S173 and T193.

Belongs to the TRAFAC class OBG-HflX-like GTPase superfamily. OBG GTPase family. Monomer. The cofactor is Mg(2+).

It is found in the cytoplasm. An essential GTPase which binds GTP, GDP and possibly (p)ppGpp with moderate affinity, with high nucleotide exchange rates and a fairly low GTP hydrolysis rate. Plays a role in control of the cell cycle, stress response, ribosome biogenesis and in those bacteria that undergo differentiation, in morphogenesis control. The sequence is that of GTPase Obg from Marinomonas sp. (strain MWYL1).